Reading from the N-terminus, the 309-residue chain is Probable lipid kinase YegS-like (309 aa).

The DAGKc domain maps to 1–134; that stretch reads MAPSHWRLIL…VDLLRIDAEH (134 aa). ATP is bound by residues T39, 65–71, and T96; that span reads GDGTLSE. Residues V219, D222, and L224 each coordinate Mg(2+). The active-site Proton acceptor is the E280.

This sequence belongs to the diacylglycerol/lipid kinase family. YegS lipid kinase subfamily. Mg(2+) is required as a cofactor. Requires Ca(2+) as cofactor.

It localises to the cytoplasm. In terms of biological role, probably phosphorylates lipids; the in vivo substrate is unknown. This Xanthomonas oryzae pv. oryzae (strain MAFF 311018) protein is Probable lipid kinase YegS-like.